The chain runs to 1452 residues: Receptor-type tyrosine-protein phosphatase mu (1452 aa).

An N-terminal signal peptide occupies residues 1–20 (MRTLGTCLVTLAGLLLTAAG). Residues 21 to 742 (ETFSGGCLFD…PEKQTDHTVK (722 aa)) are Extracellular-facing. One can recognise an MAM domain in the interval 22 to 184 (TFSGGCLFDE…VKVLGHPCTR (163 aa)). Cysteine 27 and cysteine 36 are oxidised to a cystine. Residues asparagine 72, asparagine 92, asparagine 131, and asparagine 249 are each glycosylated (N-linked (GlcNAc...) asparagine). Cystine bridges form between cysteine 96/cysteine 182 and cysteine 206/cysteine 260. The Ig-like C2-type domain occupies 186–277 (PHFLRIQNVE…VGISNYAELV (92 aa)). Fibronectin type-III domains follow at residues 284–379 (PIAP…CADP), 382–480 (GPRK…TDED), 481–587 (LPGA…SAPS), and 589–671 (PAYE…DSLQ). N-linked (GlcNAc...) asparagine glycans are attached at residues asparagine 406, asparagine 414, asparagine 454, asparagine 534, asparagine 544, asparagine 598, asparagine 651, and asparagine 681. Residues 743–764 (IAGVIAGILLFVIIFLGVVLVM) form a helical membrane-spanning segment. Residues 765 to 1452 (KKRKLAKKRK…EVALEYLNSG (688 aa)) are Cytoplasmic-facing. Serine 821 carries the post-translational modification Phosphoserine. Tyrosine-protein phosphatase domains lie at 900-1154 (FKEE…ILEA) and 1186-1448 (IKEE…ALEY). Residues aspartate 1063, 1095–1101 (CSAGAGR), and glutamine 1139 each bind substrate. Cysteine 1095 acts as the Phosphocysteine intermediate in catalysis. Cysteine 1389 (phosphocysteine intermediate) is an active-site residue.

The protein belongs to the protein-tyrosine phosphatase family. Receptor class 2B subfamily. As to quaternary structure, homodimer. As to expression, most abundant in lung, less in brain and heart.

The protein resides in the cell membrane. It carries out the reaction O-phospho-L-tyrosyl-[protein] + H2O = L-tyrosyl-[protein] + phosphate. In terms of biological role, receptor protein-tyrosine phosphatase that mediates homotypic cell-cell interactions and plays a role in adipogenic differentiation via modulation of p120 catenin/CTNND1 phosphorylation. Promotes CTNND1 dephosphorylation and prevents its cytoplasmic localization where it inhibits SLC2A4 membrane trafficking. In turn, SLC2A4 is directed to the plasma membrane and performs its glucose transporter function. The chain is Receptor-type tyrosine-protein phosphatase mu (Ptprm) from Mus musculus (Mouse).